The chain runs to 526 residues: uncharacterized protein (526 aa).

WD repeat units follow at residues 210–248 and 452–491; these read SMEQ…HHDT and SHNS…LIDS.

This is an uncharacterized protein from Acanthamoeba polyphaga mimivirus (APMV).